The chain runs to 327 residues: Methionyl-tRNA formyltransferase (327 aa).

Residue 113–116 (SILP) coordinates (6S)-5,6,7,8-tetrahydrofolate.

This sequence belongs to the Fmt family.

It catalyses the reaction L-methionyl-tRNA(fMet) + (6R)-10-formyltetrahydrofolate = N-formyl-L-methionyl-tRNA(fMet) + (6S)-5,6,7,8-tetrahydrofolate + H(+). In terms of biological role, attaches a formyl group to the free amino group of methionyl-tRNA(fMet). The formyl group appears to play a dual role in the initiator identity of N-formylmethionyl-tRNA by promoting its recognition by IF2 and preventing the misappropriation of this tRNA by the elongation apparatus. The polypeptide is Methionyl-tRNA formyltransferase (Colwellia psychrerythraea (strain 34H / ATCC BAA-681) (Vibrio psychroerythus)).